The following is a 321-amino-acid chain: 2,3,4,5-tetrahydropyridine-2,6-dicarboxylate N-succinyltransferase (321 aa).

Mg(2+)-binding residues include Asp166 and Glu183. Residue Glu199 is the Acyl-anhydride intermediate of the active site. Succinyl-CoA-binding positions include Arg201, Gly216, Ser219, Ala242, 257 to 258, Gly265, Lys281, and 294 to 297; these read EA and RRNS.

Belongs to the type 2 tetrahydrodipicolinate N-succinyltransferase family. As to quaternary structure, homotrimer.

It localises to the cytoplasm. The catalysed reaction is (S)-2,3,4,5-tetrahydrodipicolinate + succinyl-CoA + H2O = (S)-2-succinylamino-6-oxoheptanedioate + CoA. Its pathway is amino-acid biosynthesis; L-lysine biosynthesis via DAP pathway; LL-2,6-diaminopimelate from (S)-tetrahydrodipicolinate (succinylase route): step 1/3. Functionally, catalyzes the conversion of the cyclic tetrahydrodipicolinate (THDP) into the acyclic N-succinyl-L-2-amino-6-oxopimelate using succinyl-CoA. This Rothia mucilaginosa (strain DY-18) (Stomatococcus mucilaginosus) protein is 2,3,4,5-tetrahydropyridine-2,6-dicarboxylate N-succinyltransferase.